A 380-amino-acid chain; its full sequence is Putative RNA ligase (380 aa).

Its function is as follows. Putative RNA ligase. Is able to catalyze the adenylation reaction of ssDNA 3'-terminal phosphate (ssDNA 3'p) to 3'-adenylated DNA (ssDNA 3'pp5'A). The polypeptide is Putative RNA ligase (Thermovibrio ammonificans (strain DSM 15698 / JCM 12110 / HB-1)).